The sequence spans 313 residues: Ribosomal RNA small subunit methyltransferase H (313 aa).

S-adenosyl-L-methionine contacts are provided by residues 35–37 (GGH), D55, F80, D102, and Q109.

This sequence belongs to the methyltransferase superfamily. RsmH family.

The protein localises to the cytoplasm. It carries out the reaction cytidine(1402) in 16S rRNA + S-adenosyl-L-methionine = N(4)-methylcytidine(1402) in 16S rRNA + S-adenosyl-L-homocysteine + H(+). Its function is as follows. Specifically methylates the N4 position of cytidine in position 1402 (C1402) of 16S rRNA. This chain is Ribosomal RNA small subunit methyltransferase H, found in Shewanella frigidimarina (strain NCIMB 400).